We begin with the raw amino-acid sequence, 432 residues long: Protein trichome birefringence-like 23 (432 aa).

A helical; Signal-anchor for type II membrane protein membrane pass occupies residues 13–35 (QNTYLIKLVAATLITCLAFRFFV). The GDS motif motif lies at 153 to 155 (GDS). The DCXHWCLPGXXDXWN motif motif lies at 404–418 (DCLHWCLPGPIDHLN).

It belongs to the PC-esterase family. TBL subfamily.

Its subcellular location is the membrane. Functionally, may act as a bridging protein that binds pectin and other cell wall polysaccharides. Probably involved in maintaining esterification of pectins. May be involved in the specific O-acetylation of cell wall polymers. The sequence is that of Protein trichome birefringence-like 23 (TBL23) from Arabidopsis thaliana (Mouse-ear cress).